Reading from the N-terminus, the 475-residue chain is MKSYLLVPKESIETQARVGPRGTEQGERVLSRTTALRFAVANKAPDALFALGLRSATLPGARPPVSGQEERRRKGKGAKSARTGTRGADSSTPPMPGATVAEQTGAEPGSYRYMPLIGATMAHFYEDHTEKEARGELERDFEFIPDVVPLSFPGPVSAGQPGPRNRGMSSLAEREWPDECGVPLAHAQGIRGAGVMLGILDTGVDADHPEHAARVIQFRYVSLFPNSPHNPARDIRGFDPDGHGTHVCGIAAGVHHGVAPEVDLYVASVIESETIRTSLGRVAAGMEWLLHQFSRPENSTRPAVVNLSLGFPLMPPPGISEADYNLNLRALQTMIRRLLDSNVLPVVAAGNSGPDTVGYPAAFPESLAVGAVDFERNVATFSASGTVGRRVVPDIMGYGVNVYSSTERRCNNQAFYERMSGTSMAAPYVAGIAALYRCRAPDLTALEVRDLILSNAVKLPRSGTHKTGKGLAVFR.

2 disordered regions span residues Met1 to Glu27 and Thr57 to Ala106. The Peptidase S8 domain maps to Asn165–Arg475. Active-site charge relay system residues include Asp201, His243, and Ser423.

The protein belongs to the peptidase S8 family. In terms of assembly, interacts with PopD in non-starving cells.

The protein resides in the cytoplasm. It localises to the periplasm. The protein localises to the secreted. In non-starving cells, secretion and protease activity are inhibited by formation of a cytoplasmic complex with PopD. In response to starvation, PopD is degraded in a RelA- and FtsH(D)-dependent manner, thereby releasing pre-formed PopC for secretion. Secreted and active during starvation, and rapidly degraded upon secretion. Secretion is significantly and reversibly reduced by carbonyl cyanide m-chlorophenyl hydrazine (CCCP), which dissipates or reduces the proton motive force (PMF), and by nigericin, which affects the pH gradient. Its function is as follows. Required for fruiting body formation, a multicellular developmental program that is induced in response to starvation. Acts as a subtilisin-like protease that directly cleaves the CsgA precursor protein (p25) on the cell surface to generate the intercellular C-signal protein (p17) in starving cells. Preferentially acts in cis, i.e. PopC secreted by a cell only cleaves p25 on that cell. May also be important for processing of other protein(s) that are important for development. The chain is Subtilisin-like protease PopC from Myxococcus xanthus (strain DK1622).